Reading from the N-terminus, the 170-residue chain is Myelin-associated oligodendrocyte basic protein (170 aa).

The disordered stretch occupies residues 69 to 170 (SRRATSPQRP…GSPTRAPRFW (102 aa)). Low complexity predominate over residues 82–92 (PAASPVVVRAP). A phosphoserine mark is found at serine 85, serine 98, and serine 107. A run of 2 repeats spans residues 93–101 (PAKPKSPLM) and 105–110 (PRSPPR). Residues 93–115 (PAKPKSPLMPAKPRSPPRPAKPR) are 3 X 9 AA approximate tandem repeats. The stretch at 111-115 (PAKPR) is one 3; half-length repeat. The span at 118 to 130 (SRTERQPRPRPEV) shows a compositional bias: basic and acidic residues. Over residues 138–151 (KPPQKSKQPARSSP) the composition is skewed to low complexity.

The protein resides in the cytoplasm. Its subcellular location is the perinuclear region. May play a role in compacting or stabilizing the myelin sheath possibly by binding the negatively charged acidic phospholipids of the cytoplasmic membrane. In Mus musculus (Mouse), this protein is Myelin-associated oligodendrocyte basic protein (Mobp).